A 264-amino-acid polypeptide reads, in one-letter code: Neurexophilin-2 (264 aa).

The signal sequence occupies residues 1-22; it reads MRLRPLPLVVVPGLLQLLFCDS. The II stretch occupies residues 23–90; the sequence is KEVVHATEGL…WDWLANITEI (68 aa). N-linked (GlcNAc...) asparagine glycosylation is found at N86, N139, N149, and N155. The segment at 91 to 169 is III; it reads QEPLARTKRR…LVPPSKVVEF (79 aa). The IV (linker domain) stretch occupies residues 170-178; sequence EVSPQSTLE. A v (Cys-rich) region spans residues 179–264; it reads TKESKSFNCR…HSETPYLSSG (86 aa).

The protein belongs to the neurexophilin family. Post-translationally, may be proteolytically processed at the boundary between the N-terminal non-conserved and the central conserved domain in neuron-like cells. As to expression, expressed in brain and kidney.

It is found in the secreted. Its function is as follows. May be signaling molecules that resemble neuropeptides and that act by binding to alpha-neurexins and possibly other receptors. This is Neurexophilin-2 (NXPH2) from Homo sapiens (Human).